The primary structure comprises 507 residues: RNA demethylase ALKBH9B (507 aa).

Disordered stretches follow at residues 76–102 (GSERASNNVDDNYDEKSENGEDCDNHS) and 145–183 (QEDEFDEEEEEEEEERDSSRKGFDASSMKTPEKPKLSRD). A compositionally biased stretch (basic and acidic residues) spans 89 to 100 (DEKSENGEDCDN). Over residues 145–160 (QEDEFDEEEEEEEEER) the composition is skewed to acidic residues. A compositionally biased stretch (basic and acidic residues) spans 174–183 (TPEKPKLSRD). Residues 317 to 414 (VPDSCIVNIY…RISITFRKMD (98 aa)) enclose the Fe2OG dioxygenase domain. 3 residues coordinate Fe cation: His-335, Asp-337, and His-396. Arg-405 contacts 2-oxoglutarate. The disordered stretch occupies residues 432–507 (EPLPLDLNRS…MPRPSRRNYG (76 aa)). The span at 440-450 (RSGSTSRFSRL) shows a compositional bias: polar residues. Residues 497-507 (GMPRPSRRNYG) are compositionally biased toward basic residues.

The protein belongs to the alkB family. In terms of assembly, (Microbial infection) Interacts with the capsid protein ORF3b of the alfalfa mosaic virus (AMV). Fe(2+) serves as cofactor.

It localises to the cytoplasm. The protein resides in the P-body. It is found in the cytoplasmic granule. It carries out the reaction an N(6)-methyladenosine in mRNA + 2-oxoglutarate + O2 = an adenosine in mRNA + formaldehyde + succinate + CO2. In terms of biological role, dioxygenase that demethylates RNA by oxidative demethylation: specifically demethylates N(6)-methyladenosine (m6A) RNA, the most prevalent internal modification of messenger RNA (mRNA) in higher eukaryotes. Modulates viral infection of the alfalfa mosaic virus (AMV) and the m6A abundance in its genomic RNAs. This chain is RNA demethylase ALKBH9B, found in Arabidopsis thaliana (Mouse-ear cress).